Consider the following 578-residue polypeptide: A-type ATP synthase subunit A (578 aa).

228–235 (GPFGSGKT) is an ATP binding site.

It belongs to the ATPase alpha/beta chains family. Has multiple subunits with at least A(3), B(3), C, D, E, F, H, I and proteolipid K(x).

The protein resides in the cell membrane. It catalyses the reaction ATP + H2O + 4 H(+)(in) = ADP + phosphate + 5 H(+)(out). Functionally, component of the A-type ATP synthase that produces ATP from ADP in the presence of a proton gradient across the membrane. The A chain is the catalytic subunit. This Methanosarcina acetivorans (strain ATCC 35395 / DSM 2834 / JCM 12185 / C2A) protein is A-type ATP synthase subunit A.